A 601-amino-acid chain; its full sequence is Aspartate--tRNA ligase (601 aa).

Glu-183 is a binding site for L-aspartate. The aspartate stretch occupies residues 207-210; the sequence is QIFK. Residue Arg-229 coordinates L-aspartate. ATP is bound by residues 229 to 231 and Gln-238; that span reads RDE. Residue His-457 coordinates L-aspartate. Position 497 (Glu-497) interacts with ATP. Residue Arg-504 coordinates L-aspartate. 549–552 contacts ATP; it reads GIDR.

It belongs to the class-II aminoacyl-tRNA synthetase family. Type 1 subfamily. In terms of assembly, homodimer.

The protein resides in the cytoplasm. It carries out the reaction tRNA(Asp) + L-aspartate + ATP = L-aspartyl-tRNA(Asp) + AMP + diphosphate. In terms of biological role, catalyzes the attachment of L-aspartate to tRNA(Asp) in a two-step reaction: L-aspartate is first activated by ATP to form Asp-AMP and then transferred to the acceptor end of tRNA(Asp). The sequence is that of Aspartate--tRNA ligase from Leptospira interrogans serogroup Icterohaemorrhagiae serovar copenhageni (strain Fiocruz L1-130).